The primary structure comprises 424 residues: Arogenate dehydratase 1 (424 aa).

A chloroplast-targeting transit peptide spans M1 to P52. A Prephenate dehydratase domain is found at R131–R308. The 92-residue stretch at T321–P412 folds into the ACT domain.

As to expression, mostly expressed in flowers, especially in petals (corollas and tubes), and, at low levels, in roots, stems, leaves, pistils, stamens, ovaries and sepals.

The protein resides in the plastid. It localises to the chloroplast stroma. The catalysed reaction is L-arogenate + H(+) = L-phenylalanine + CO2 + H2O. It participates in amino-acid biosynthesis; L-phenylalanine biosynthesis; L-phenylalanine from L-arogenate: step 1/1. In terms of biological role, converts L-arogenate produced from the shikimate-chorismate pathway into phenylalanine (Phe). Involved in floral volatile benzenoids and phenylpropanoids (FVBP) production. The sequence is that of Arogenate dehydratase 1 from Petunia hybrida (Petunia).